Consider the following 209-residue polypeptide: ADP-ribose pyrophosphatase (209 aa).

Substrate-binding positions include 28 to 29, 51 to 52, Arg56, and Arg79; these read FF and RE. The Nudix hydrolase domain maps to 55-193; sequence ERGHAAVLLP…KIDNAASVIA (139 aa). Ala96 provides a ligand contact to Mg(2+). The Nudix box signature appears at 97 to 118; that stretch reads GMIEEGESVEDVARREAIEEAG. Substrate is bound at residue Met98. Residues Glu112 and Glu116 each coordinate Mg(2+). Substrate contacts are provided by residues 133–135 and Glu139; that span reads SPG. The active-site Proton acceptor is Glu162. Position 164 (Glu164) interacts with Mg(2+).

The protein belongs to the Nudix hydrolase family. NudF subfamily. Homodimer. Mg(2+) is required as a cofactor.

It carries out the reaction ADP-D-ribose + H2O = D-ribose 5-phosphate + AMP + 2 H(+). Its activity is regulated as follows. Inhibited by phosphorylated compounds such as AMP, ADP, ATP, 3-phosphoglyceric acid and PPi. Not inhibited by orthophosphate. Activity is high in cells grown in low glucose concentrations and decreases dramatically as glucose concentration increases. Acts on ADP-mannose and ADP-glucose as well as ADP-ribose. Prevents glycogen biosynthesis. The reaction catalyzed by this enzyme is a limiting step of the gluconeogenic process. This chain is ADP-ribose pyrophosphatase (nudF), found in Escherichia coli O157:H7.